The sequence spans 792 residues: RAD50-interacting protein 1 (792 aa).

Positions 1–22 (MLPAGEIGASPAAPCCSESGDE) are disordered. Residues 103–124 (IRSALKNAEESKQFLNQFLEQE) adopt a coiled-coil conformation. The 573-residue stretch at 220-792 (WHKILKDKLT…LRTNWPNTGK (573 aa)) folds into the RINT1/TIP20 domain.

The protein belongs to the RINT1 family. In terms of assembly, component of the NRZ complex composed of NBAS, ZW10 and RINT1/TIP20L; NRZ associates with SNAREs STX18, USE1L, BNIP1/SEC20L and SEC22B (the assembly has been described as syntaxin 18 complex). Interacts directly with BNIP1/SEC20L and ZW10. Interacts with UVRAG. Interacts with RAD50 during late S and G2/M phases. Interacts with RBL2, preferentially with the active, hypophosphorylated form.

The protein resides in the cytoplasm. Its subcellular location is the endoplasmic reticulum membrane. Its function is as follows. Involved in regulation of membrane traffic between the Golgi and the endoplasmic reticulum (ER); the function is proposed to depend on its association in the NRZ complex which is believed to play a role in SNARE assembly at the ER. May play a role in cell cycle checkpoint control. Essential for telomere length control. The polypeptide is RAD50-interacting protein 1 (RINT1) (Homo sapiens (Human)).